The following is a 325-amino-acid chain: Structure-specific endonuclease subunit SLX1 (325 aa).

The region spanning 10 to 92 is the GIY-YIG domain; it reads ALYTVYILRS…NNPHLSMHIP (83 aa). An SLX1-type zinc finger spans residues 230-284; sequence CVVCREEMKSGEGLHAVCTHEGCDGVGHISCWSRSFLKNNDTGSILPVQGQCPMC.

It belongs to the SLX1 family. As to quaternary structure, forms a heterodimer with SLX4. A divalent metal cation is required as a cofactor.

It is found in the nucleus. Its function is as follows. Catalytic subunit of the SLX1-SLX4 structure-specific endonuclease that resolves DNA secondary structures generated during DNA repair and recombination. Has endonuclease activity towards branched DNA substrates, introducing single-strand cuts in duplex DNA close to junctions with ss-DNA. The protein is Structure-specific endonuclease subunit SLX1 of Chaetomium globosum (strain ATCC 6205 / CBS 148.51 / DSM 1962 / NBRC 6347 / NRRL 1970) (Soil fungus).